Here is a 59-residue protein sequence, read N- to C-terminus: DNA-directed RNA polymerase subunit Rpo6 (59 aa).

It belongs to the archaeal Rpo6/eukaryotic RPB6 RNA polymerase subunit family. Part of the RNA polymerase complex.

The protein localises to the cytoplasm. It carries out the reaction RNA(n) + a ribonucleoside 5'-triphosphate = RNA(n+1) + diphosphate. In terms of biological role, DNA-dependent RNA polymerase (RNAP) catalyzes the transcription of DNA into RNA using the four ribonucleoside triphosphates as substrates. The sequence is that of DNA-directed RNA polymerase subunit Rpo6 from Halorubrum lacusprofundi (strain ATCC 49239 / DSM 5036 / JCM 8891 / ACAM 34).